The following is a 201-amino-acid chain: Large ribosomal subunit protein uL4 (201 aa).

The disordered stretch occupies residues 44–73 (RAQKSRAEVKASRKKPWRQKGTGRARAGSV). The span at 55-66 (SRKKPWRQKGTG) shows a compositional bias: basic residues.

Belongs to the universal ribosomal protein uL4 family. Part of the 50S ribosomal subunit.

In terms of biological role, one of the primary rRNA binding proteins, this protein initially binds near the 5'-end of the 23S rRNA. It is important during the early stages of 50S assembly. It makes multiple contacts with different domains of the 23S rRNA in the assembled 50S subunit and ribosome. Functionally, forms part of the polypeptide exit tunnel. This chain is Large ribosomal subunit protein uL4, found in Hamiltonella defensa subsp. Acyrthosiphon pisum (strain 5AT).